The primary structure comprises 444 residues: Alpha-1,3-mannosyl-glycoprotein 2-beta-N-acetylglucosaminyltransferase (444 aa).

Residues 1 to 6 (MARISC) are Cytoplasmic-facing. The chain crosses the membrane as a helical; Signal-anchor for type II membrane protein span at residues 7 to 24 (DLRFLLIPAAFMFIYIQM). The Lumenal portion of the chain corresponds to 25 to 444 (RLFQTQSQYA…SVMQLGIRNS (420 aa)). The stretch at 61 to 92 (KQSRIVALEDMKNRQDEELVQLKDLIQTFEKK) forms a coiled coil. Substrate-binding residues include R115, D144, H188, and D210. D211 contacts Mn(2+). D287 acts as the Proton acceptor in catalysis. Position 318 (S318) interacts with substrate. N-linked (GlcNAc...) asparagine glycosylation is present at N351.

Belongs to the glycosyltransferase 13 family. Mn(2+) is required as a cofactor. Post-translationally, glycosylated. Expressed in roots, stems, leaves and flowers.

The protein resides in the golgi apparatus membrane. It catalyses the reaction N(4)-(alpha-D-Man-(1-&gt;3)-[alpha-D-Man-(1-&gt;3)-[alpha-D-Man-(1-&gt;6)]-alpha-D-Man-(1-&gt;6)]-beta-D-Man-(1-&gt;4)-beta-D-GlcNAc-(1-&gt;4)-beta-D-GlcNAc)-L-asparaginyl-[protein] (N-glucan mannose isomer 5A1,2) + UDP-N-acetyl-alpha-D-glucosamine = N(4)-{beta-D-GlcNAc-(1-&gt;2)-alpha-D-Man-(1-&gt;3)-[alpha-D-Man-(1-&gt;3)-[alpha-D-Man-(1-&gt;6)]-alpha-D-Man-(1-&gt;6)]-beta-D-Man-(1-&gt;4)-beta-D-GlcNAc-(1-&gt;4)-beta-D-GlcNAc}-L-asparaginyl-[protein] + UDP + H(+). It functions in the pathway protein modification; protein glycosylation. Initiates complex N-linked carbohydrate formation. Essential for the conversion of high-mannose to hybrid and complex N-glycans. Required for normal root growth and morphology. In Arabidopsis thaliana (Mouse-ear cress), this protein is Alpha-1,3-mannosyl-glycoprotein 2-beta-N-acetylglucosaminyltransferase.